The chain runs to 1144 residues: Probable translation initiation factor IF-2 (1144 aa).

Residues 232–362 (FAGVMFGDGS…LSLLLLRFGI (131 aa)) enclose the DOD-type homing endonuclease domain. One can recognise a tr-type G domain in the interval 551–768 (TTETHNFVAN…LIAGLSQKYL (218 aa)). Residues 624 to 628 (DTPGH) and 678 to 681 (NKID) each bind GTP.

It belongs to the TRAFAC class translation factor GTPase superfamily. Classic translation factor GTPase family. IF-2 subfamily. Post-translationally, this protein undergoes a protein self splicing that involves a post-translational excision of the intervening region (intein) followed by peptide ligation.

In terms of biological role, function in general translation initiation by promoting the binding of the formylmethionine-tRNA to ribosomes. Seems to function along with eIF-2. The protein is Probable translation initiation factor IF-2 (infB) of Thermococcus kodakarensis (strain ATCC BAA-918 / JCM 12380 / KOD1) (Pyrococcus kodakaraensis (strain KOD1)).